We begin with the raw amino-acid sequence, 299 residues long: Homoserine kinase (299 aa).

Position 88–98 (88–98) interacts with ATP; the sequence is PLGRGLGSSAT.

The protein belongs to the GHMP kinase family. Homoserine kinase subfamily.

Its subcellular location is the cytoplasm. The catalysed reaction is L-homoserine + ATP = O-phospho-L-homoserine + ADP + H(+). Its pathway is amino-acid biosynthesis; L-threonine biosynthesis; L-threonine from L-aspartate: step 4/5. Its function is as follows. Catalyzes the ATP-dependent phosphorylation of L-homoserine to L-homoserine phosphate. This Gloeobacter violaceus (strain ATCC 29082 / PCC 7421) protein is Homoserine kinase.